The chain runs to 438 residues: Serine hydroxymethyltransferase (438 aa).

(6S)-5,6,7,8-tetrahydrofolate contacts are provided by residues leucine 133 and 137 to 139 (GHL). Lysine 242 carries the post-translational modification N6-(pyridoxal phosphate)lysine.

This sequence belongs to the SHMT family. Homodimer. The cofactor is pyridoxal 5'-phosphate.

It is found in the cytoplasm. It catalyses the reaction (6R)-5,10-methylene-5,6,7,8-tetrahydrofolate + glycine + H2O = (6S)-5,6,7,8-tetrahydrofolate + L-serine. The protein operates within one-carbon metabolism; tetrahydrofolate interconversion. It participates in amino-acid biosynthesis; glycine biosynthesis; glycine from L-serine: step 1/1. In terms of biological role, catalyzes the reversible interconversion of serine and glycine with tetrahydrofolate (THF) serving as the one-carbon carrier. This reaction serves as the major source of one-carbon groups required for the biosynthesis of purines, thymidylate, methionine, and other important biomolecules. Also exhibits THF-independent aldolase activity toward beta-hydroxyamino acids, producing glycine and aldehydes, via a retro-aldol mechanism. The protein is Serine hydroxymethyltransferase of Brucella ovis (strain ATCC 25840 / 63/290 / NCTC 10512).